Here is an 84-residue protein sequence, read N- to C-terminus: GTP cyclohydrolase 1 feedback regulatory protein (84 aa).

The protein belongs to the GFRP family. Homopentamer. Forms a complex with GCH1 where a GCH1 homodecamer is sandwiched by two GFRP homopentamers.

Its subcellular location is the nucleus. It localises to the nucleus membrane. It is found in the cytoplasm. The protein localises to the cytosol. Mediates tetrahydrobiopterin inhibition of GTP cyclohydrolase 1. The protein is GTP cyclohydrolase 1 feedback regulatory protein (gchfr) of Xenopus tropicalis (Western clawed frog).